Here is a 56-residue protein sequence, read N- to C-terminus: Photosystem II assembly protein Psb34 (56 aa).

The Cytoplasmic portion of the chain corresponds to 1 to 33; sequence MRYTTDEGGRLNNFAIEPKVYQAQPWTPQQKVR. The chain crosses the membrane as a helical span at residues 34–54; sequence AALLVGGGLLLVAGLVAIAVG. The Extracellular segment spans residues 55-56; the sequence is VS.

Part of photosystem II (PSII) assembly intermediate complex PSII-I; crystallized from a strain without psbJ, it forms monomeric PSII before addition of the oxygen evolving complex. PSII-I includes 3 assembly factors not found in mature PSII (Psb27, Psb28 and Psb34). The N-terminus of Psb34 (this protein) binds to CP47 (psbB) in close proximity to PsbH on the cytoplasmic face of PSII.

The protein localises to the cellular thylakoid membrane. Its function is as follows. Involved in photosystem II (PSII) assembly and/or repair, probably in conversion of late PSII assembly intermediates into mature dimeric PSII. The sequence is that of Photosystem II assembly protein Psb34 from Thermosynechococcus vestitus (strain NIES-2133 / IAM M-273 / BP-1).